The sequence spans 49 residues: Putative exported peptide YydF (49 aa).

Suggested to be the precursor for an exported, modified peptide that has antimicrobial and/or signaling properties. Synthesis requires YydG and YydH; the peptide is proposed to be exported by the YydIJ transporter. In the absence of the transporter, the modified peptide activates the LiaRS two-component regulatory system, possibly by eliciting cell envelope stress. This activation can occur in trans in cocultured cells lacking either the transporter or the whole operon. The sequence is that of Putative exported peptide YydF (yydF) from Bacillus subtilis (strain 168).